The sequence spans 303 residues: Phosphatidylglycerol--prolipoprotein diacylglyceryl transferase (303 aa).

The next 3 membrane-spanning stretches (helical) occupy residues 18–38, 50–70, and 106–126; these read LGTLTVRWYGILIAISVLIGL, INPGIINDLMPILILSSIFGA, and IWNGGIAIHGALIMGTISIIL. Residue Arg-154 participates in a 1,2-diacyl-sn-glycero-3-phospho-(1'-sn-glycerol) binding. 3 helical membrane passes run 193-213, 223-243, and 266-286; these read PTFLYESLWNICIFLILIFLF, LPSGALSCIYLITYSLGRIWI, and IAQLISFLLICLGSFGLWWIY.

This sequence belongs to the Lgt family.

It is found in the cell inner membrane. The enzyme catalyses L-cysteinyl-[prolipoprotein] + a 1,2-diacyl-sn-glycero-3-phospho-(1'-sn-glycerol) = an S-1,2-diacyl-sn-glyceryl-L-cysteinyl-[prolipoprotein] + sn-glycerol 1-phosphate + H(+). It participates in protein modification; lipoprotein biosynthesis (diacylglyceryl transfer). Catalyzes the transfer of the diacylglyceryl group from phosphatidylglycerol to the sulfhydryl group of the N-terminal cysteine of a prolipoprotein, the first step in the formation of mature lipoproteins. In Prochlorococcus marinus (strain SARG / CCMP1375 / SS120), this protein is Phosphatidylglycerol--prolipoprotein diacylglyceryl transferase.